The following is a 596-amino-acid chain: MAEATEPKEVAPGSQGQPEGATIEGPGEPGAADLEGREASEEAAEAPRDLGAGVEARASGKEEGGCGQDEGTGGAQAQDPRTGPEAETPGASGAPGEAEAAERDPEGAIPQGAEEAPSAQQVQGMSSGLDSQGEAPEVPGDSRREPEDPTASEAGEEAESGQEAQGGGALGLQINPEVQGLAGDNMDTEAPAGGPLGSESEPQGGGESSPQPQDEAIEIVTTEIGGNESGELAGASAADAAGEGETLGKDGSEEAASEDARVDAHENGDQGKLQEETGEEEARPEPELKGPCEGAIQEKPPDGSLDGEEAKSTEHEEESQAELSNHLAEEPSVQGGEELGRVNGRRENGPALEEGDPGQEHDITLFVKAGYDGESIGNCPFSQRLFMILWLKGVIFNVTTVDLKRKPADLQNLAPGTNPPFMTFDGEVKTDVNKIEEFLEEKLVPPRYPKLGTQHPESNSAGNDVFAKFSAFIKNTKKDANEIYEKNLLRALKKLDSYLNSPLPDEIDADSSEDVTVSQRKFLDGDELTLADCNLLPKLHIIKIVAKKYRDFEFPSEMTGIWRYLNNAYARDEFTNTCPADREIEHAYSDAAKRMK.

The interval 1-360 (MAEATEPKEV…ALEEGDPGQE (360 aa)) is disordered. Basic and acidic residues predominate over residues 34-48 (LEGREASEEAAEAPR). Phosphoserine is present on Ser-40. Positions 65–74 (GCGQDEGTGG) are enriched in gly residues. The segment covering 83–98 (GPEAETPGASGAPGEA) has biased composition (low complexity). Polar residues predominate over residues 118-130 (SAQQVQGMSSGLD). A compositionally biased stretch (acidic residues) spans 148–160 (DPTASEAGEEAES). Low complexity-rich tracts occupy residues 197 to 213 (GSES…PQPQ) and 225 to 244 (GGNE…AGEG). Positions 246 to 290 (TLGKDGSEEAASEDARVDAHENGDQGKLQEETGEEEARPEPELKG) are enriched in basic and acidic residues. Ser-304 bears the Phosphoserine mark. Basic and acidic residues predominate over residues 338-348 (ELGRVNGRREN). Residues 379–382 (CPFS) carry the G-site motif. The helical transmembrane segment at 381 to 401 (FSQRLFMILWLKGVIFNVTTV) threads the bilayer. The GST C-terminal domain occupies 425 to 596 (DGEVKTDVNK…AYSDAAKRMK (172 aa)).

It belongs to the chloride channel CLIC family. As to quaternary structure, monomer (soluble state). Interacts with dopamine receptors DRD2, DRD3 and DRD4. Phosphorylated.

The protein localises to the cytoplasm. Its subcellular location is the cell membrane. The catalysed reaction is chloride(in) = chloride(out). Its activity is regulated as follows. Channel activity is redox- and pH-regulated. Inhibited by IAA-94. Functionally, in the soluble state, catalyzes glutaredoxin-like thiol disulfide exchange reactions with reduced glutathione as electron donor. Can insert into membranes and form voltage-dependent chloride-selective channels. The channel opens upon membrane depolarization at positive voltages and closes at negative membrane voltages. May play a critical role in water-secreting cells, possibly through the regulation of chloride ion transport. The sequence is that of Chloride intracellular channel protein 6 (Clic6) from Mus musculus (Mouse).